The following is a 215-amino-acid chain: Cytochrome b6 (215 aa).

The helical transmembrane segment at 32–52 (IFYCIGGITFTCFLVQVATGF) threads the bilayer. C35 serves as a coordination point for heme c. G37, R83, H86, H100, R103, and R114 together coordinate heme b. The chain crosses the membrane as a helical span at residues 90 to 110 (ASMMVLMMVLHVFRVYLTGGF). 2 helical membrane passes run 116–136 (LTWV…VTGY) and 186–206 (LHTF…FLMI). 2 residues coordinate heme b: H187 and H202. R207 and I211 together coordinate heme c. S212 is a binding site for heme b.

It belongs to the cytochrome b family. PetB subfamily. In terms of assembly, the 4 large subunits of the cytochrome b6-f complex are cytochrome b6, subunit IV (17 kDa polypeptide, PetD), cytochrome f and the Rieske protein, while the 4 small subunits are PetG, PetL, PetM and PetN. The complex functions as a dimer. Heme b is required as a cofactor. Requires heme c as cofactor. In terms of processing, the N-terminus is blocked.

It localises to the plastid. The protein localises to the chloroplast thylakoid membrane. Its function is as follows. Component of the cytochrome b6-f complex, which mediates electron transfer between photosystem II (PSII) and photosystem I (PSI), cyclic electron flow around PSI, and state transitions. This is Cytochrome b6 from Chlamydomonas reinhardtii (Chlamydomonas smithii).